A 561-amino-acid chain; its full sequence is Formate--tetrahydrofolate ligase (561 aa).

Residue 70–77 coordinates ATP; that stretch reads TPAGEGKT.

It belongs to the formate--tetrahydrofolate ligase family.

The catalysed reaction is (6S)-5,6,7,8-tetrahydrofolate + formate + ATP = (6R)-10-formyltetrahydrofolate + ADP + phosphate. It participates in one-carbon metabolism; tetrahydrofolate interconversion. The protein is Formate--tetrahydrofolate ligase of Pelagibacter ubique (strain HTCC1062).